The following is a 233-amino-acid chain: NAD(P)H-hydrate epimerase (233 aa).

The region spanning 15–218 (SQQFDVELMS…KLQEKYNFIV (204 aa)) is the YjeF N-terminal domain. A (6S)-NADPHX-binding site is contributed by 67-71 (NNGGD). N68 and D128 together coordinate K(+). (6S)-NADPHX contacts are provided by residues 132–138 (GFSFKPP), Y143, and D161. K(+) is bound at residue S164.

The protein belongs to the NnrE/AIBP family. K(+) serves as cofactor.

It catalyses the reaction (6R)-NADHX = (6S)-NADHX. It carries out the reaction (6R)-NADPHX = (6S)-NADPHX. Its function is as follows. Catalyzes the epimerization of the S- and R-forms of NAD(P)HX, a damaged form of NAD(P)H that is a result of enzymatic or heat-dependent hydration. This is a prerequisite for the S-specific NAD(P)H-hydrate dehydratase to allow the repair of both epimers of NAD(P)HX. This Paramecium tetraurelia protein is NAD(P)H-hydrate epimerase.